The following is a 422-amino-acid chain: Synaptotagmin-1 (422 aa).

Over 1 to 57 the chain is Vesicular; the sequence is MVSESHHEALAAPPVTTVATVLPSNATEPASPGEGKEDAFSKLKEKFMNELHKIPLP. An N-linked (GlcNAc...) asparagine glycan is attached at Asn-25. A helical transmembrane segment spans residues 58–80; it reads PWALIAIAIVAVLLVLTCCFCIC. 5 S-palmitoyl cysteine lipidation sites follow: Cys-75, Cys-76, Cys-78, Cys-80, and Cys-83. Residues 81-422 are Cytoplasmic-facing; sequence KKCLFKKKNK…EVDAMLAVKK (342 aa). The interval 113–142 is disordered; it reads TMKDQALKDDDAETGLTDGEEKEEPKEEEK. Positions 122 to 134 are enriched in acidic residues; that stretch reads DDAETGLTDGEEK. Residue Thr-129 is modified to Phosphothreonine. The segment at 136-382 is phospholipid binding; it reads EPKEEEKLGK…AIGKVFVGYN (247 aa). The region spanning 142–261 is the C2 1 domain; that stretch reads KLGKLQYSLD…DFGHVTEEWR (120 aa). Residues Leu-172, Asp-173, and Asp-179 each contribute to the Ca(2+) site. Tyr-230 is subject to Phosphotyrosine. Ca(2+)-binding residues include Asp-231, Phe-232, Asp-233, Ser-236, Lys-237, and Asp-239. Ser-265 carries the phosphoserine modification. In terms of domain architecture, C2 2 spans 273–406; it reads KLGDICFSLR…NPRRPIAQWH (134 aa). Asp-304 and Asp-310 together coordinate Ca(2+). 2 positions are modified to phosphoserine: Ser-343 and Ser-345. Asp-364, Asp-366, and Asp-372 together coordinate Ca(2+).

Belongs to the synaptotagmin family. In terms of assembly, homotetramer. Heterodimer; heterodimerizes with SYT2 in presence of calcium. Interacts with SCAMP5. Interacts with STON2. Forms a complex with SV2B, syntaxin 1 and SNAP25. Interacts with SV2A, SV2B and SV2C. Interacts with RIMS1. Interacts with PRRT2. Interacts with DNAJC5 in a phosphorylation-dependent manner. Interacts (via N-terminus) with RAB3A. Interacts with SYT12. Interacts with calmodulin. Interacts with DNM1 (via C-terminal proline-rich domain (PRD)); this interaction facilitates vesicle fission during clathrin-mediated endocytosis (CME). Requires Ca(2+) as cofactor. In terms of processing, glycosylated. As to expression, expressed in melanocytes.

It is found in the cytoplasmic vesicle. It localises to the secretory vesicle membrane. Its subcellular location is the secretory vesicle. The protein localises to the synaptic vesicle membrane. The protein resides in the chromaffin granule membrane. It is found in the cytoplasm. Its function is as follows. Calcium sensor that participates in triggering neurotransmitter release at the synapse. May have a regulatory role in the membrane interactions during trafficking of synaptic vesicles at the active zone of the synapse. It binds acidic phospholipids with a specificity that requires the presence of both an acidic head group and a diacyl backbone. A Ca(2+)-dependent interaction between synaptotagmin and putative receptors for activated protein kinase C has also been reported. It can bind to at least three additional proteins in a Ca(2+)-independent manner; these are neurexins, syntaxin and AP2. Plays a role in dendrite formation by melanocytes. This Homo sapiens (Human) protein is Synaptotagmin-1.